The sequence spans 72 residues: Translation initiation factor IF-1 (72 aa).

In terms of domain architecture, S1-like spans 1 to 72; sequence MSKEEVLEFS…TKGRITYRYK (72 aa).

This sequence belongs to the IF-1 family. In terms of assembly, component of the 30S ribosomal translation pre-initiation complex which assembles on the 30S ribosome in the order IF-2 and IF-3, IF-1 and N-formylmethionyl-tRNA(fMet); mRNA recruitment can occur at any time during PIC assembly.

Its subcellular location is the cytoplasm. Functionally, one of the essential components for the initiation of protein synthesis. Stabilizes the binding of IF-2 and IF-3 on the 30S subunit to which N-formylmethionyl-tRNA(fMet) subsequently binds. Helps modulate mRNA selection, yielding the 30S pre-initiation complex (PIC). Upon addition of the 50S ribosomal subunit IF-1, IF-2 and IF-3 are released leaving the mature 70S translation initiation complex. The polypeptide is Translation initiation factor IF-1 (Bartonella quintana (strain Toulouse) (Rochalimaea quintana)).